Consider the following 323-residue polypeptide: GDP-mannose 4,6-dehydratase (323 aa).

NADP(+)-binding positions include 11–14 (TGQD), Arg36, 59–60 (DM), and 81–85 (LAAQS). The active site involves Thr126. Residues Glu128 and Tyr150 each act as nucleophile in the active site. NADP(+) is bound by residues Lys154, His180, and Arg185.

The protein belongs to the NAD(P)-dependent epimerase/dehydratase family. GDP-mannose 4,6-dehydratase subfamily. Homotetramer. NADP(+) is required as a cofactor.

It carries out the reaction GDP-alpha-D-mannose = GDP-4-dehydro-alpha-D-rhamnose + H2O. It participates in bacterial outer membrane biogenesis; lipopolysaccharide biosynthesis. In terms of biological role, catalyzes the conversion of GDP-D-mannose to GDP-4-dehydro-6-deoxy-D-mannose. In Pseudomonas aeruginosa (strain ATCC 15692 / DSM 22644 / CIP 104116 / JCM 14847 / LMG 12228 / 1C / PRS 101 / PAO1), this protein is GDP-mannose 4,6-dehydratase.